The sequence spans 335 residues: UPF0353 protein MAP_1207 (335 aa).

A run of 2 helical transmembrane segments spans residues W18 to L38 and L67 to T87. The 197-residue stretch at V98–L294 folds into the VWFA domain. Residues V309–I329 traverse the membrane as a helical segment.

The protein belongs to the UPF0353 family.

Its subcellular location is the cell membrane. The sequence is that of UPF0353 protein MAP_1207 from Mycolicibacterium paratuberculosis (strain ATCC BAA-968 / K-10) (Mycobacterium paratuberculosis).